Reading from the N-terminus, the 628-residue chain is Beta-lactamase-like protein 1 (628 aa).

The N-terminal stretch at 1-28 (MKNILSFSFSFSFLYILFLLLFLNNNLL) is a signal peptide. N-linked (GlcNAc...) asparagine glycosylation is found at Asn45, Asn68, Asn198, and Asn241. The span at 245 to 281 (NNNNNNNNNNNNNNNNNNNNNNNNNNNNNNNNNNNNN) shows a compositional bias: low complexity. The interval 245–285 (NNNNNNNNNNNNNNNNNNNNNNNNNNNNNNNNNNNNNKIKT) is disordered. N-linked (GlcNAc...) asparagine glycosylation is found at Asn313 and Asn335. Residues 494 to 516 (EKEEKEEEEENQQDESQQQQQQQ) form a disordered region. Residues 496–506 (EEKEEEEENQQ) show a composition bias toward acidic residues. Positions 507–516 (DESQQQQQQQ) are enriched in low complexity.

Belongs to the beta-lactamase family.

The protein localises to the secreted. The protein is Beta-lactamase-like protein 1 of Dictyostelium discoideum (Social amoeba).